A 323-amino-acid polypeptide reads, in one-letter code: Peroxisomal targeting signal 2 receptor (323 aa).

WD repeat units lie at residues 65-96, 109-141, 153-184, 196-227, 240-271, and 284-315; these read DWND…QLWD, EHAQ…KLWD, GHES…RIWD, AHQA…RGWD, GHTY…RFWN, and HHTE…KIYD.

It belongs to the WD repeat peroxin-7 family. As to quaternary structure, interacts with PEX5; interaction only takes place when PEX7 is associated with cargo proteins. Interacts with VWA8. Ubiquitous. Highest expression in pancreas, skeletal muscle and heart.

The protein resides in the cytoplasm. It localises to the cytosol. The protein localises to the peroxisome matrix. Its function is as follows. Receptor required for the peroxisomal import of proteins containing a C-terminal PTS2-type peroxisomal targeting signal. Specifically binds to cargo proteins containing a PTS2 peroxisomal targeting signal in the cytosol. Cargo protein-binding triggers interaction with PEX5 and formation of a ternary complex composed of PEX5 and PEX7 along with PTS2-containing cargo proteins, which is tranlocated into peroxisomes by passing through the PEX13-PEX14 docking complex. This chain is Peroxisomal targeting signal 2 receptor, found in Homo sapiens (Human).